Consider the following 85-residue polypeptide: High-potential iron-sulfur protein (85 aa).

[4Fe-4S] cluster is bound by residues Cys43, Cys46, Cys63, and Cys77.

This sequence belongs to the high-potential iron-sulfur protein (HiPIP) family. In terms of assembly, homodimer.

The protein localises to the periplasm. Functionally, specific class of high-redox-potential 4Fe-4S ferredoxins. Functions in anaerobic electron transport in most purple and in some other photosynthetic bacteria and in at least one genus (Paracoccus) of halophilic, denitrifying bacteria. The sequence is that of High-potential iron-sulfur protein from Allochromatium warmingii (Chromatium warmingii).